Here is a 202-residue protein sequence, read N- to C-terminus: Small ribosomal subunit protein uS4c (202 aa).

The region spanning 90 to 153 (MRLDNVIFRL…KSEAIISKNI (64 aa)) is the S4 RNA-binding domain.

The protein belongs to the universal ribosomal protein uS4 family. In terms of assembly, part of the 30S ribosomal subunit. Contacts protein S5. The interaction surface between S4 and S5 is involved in control of translational fidelity.

The protein localises to the plastid. It is found in the chloroplast. In terms of biological role, one of the primary rRNA binding proteins, it binds directly to 16S rRNA where it nucleates assembly of the body of the 30S subunit. Its function is as follows. With S5 and S12 plays an important role in translational accuracy. This Cyathophorum bulbosum (Moss) protein is Small ribosomal subunit protein uS4c (rps4).